Reading from the N-terminus, the 381-residue chain is Creatine kinase M-type (381 aa).

The Phosphagen kinase N-terminal domain maps to 11-98; sequence KLNYKPQEEY…FDPIIQDRHG (88 aa). Residues 125–367 form the Phosphagen kinase C-terminal domain; sequence YVLSSRVRTG…KLMVEMEKKL (243 aa). An ATP-binding site is contributed by 128–132; that stretch reads SSRVR. Residue Ser164 is modified to Phosphoserine. Thr166 bears the Phosphothreonine mark. Phosphoserine is present on Ser178. Thr180 is modified (phosphothreonine). An ATP-binding site is contributed by His191. Position 199 is a phosphoserine (Ser199). Residues Arg236 and Arg292 each coordinate ATP. Thr313 and Thr322 each carry phosphothreonine. Residues 320-325 and Asp335 contribute to the ATP site; that span reads RGTGGV. Ser372 bears the Phosphoserine mark.

The protein belongs to the ATP:guanido phosphotransferase family. Dimer of identical or non-identical chains, which can be either B (brain type) or M (muscle type). With MM being the major form in skeletal muscle and myocardium, MB existing in myocardium, and BB existing in many tissues, especially brain.

Its subcellular location is the cytoplasm. The enzyme catalyses creatine + ATP = N-phosphocreatine + ADP + H(+). Its function is as follows. Reversibly catalyzes the transfer of phosphate between ATP and various phosphogens (e.g. creatine phosphate). Creatine kinase isoenzymes play a central role in energy transduction in tissues with large, fluctuating energy demands, such as skeletal muscle, heart, brain and spermatozoa. This Mus musculus (Mouse) protein is Creatine kinase M-type (Ckm).